Here is a 315-residue protein sequence, read N- to C-terminus: Thioredoxin reductase (315 aa).

45–52 (EGNTPGGK) contacts FAD. Residues Cys-145 and Cys-148 are joined by a disulfide bond. Position 288-297 (288-297 (DCRSKSFRQI)) interacts with FAD.

It belongs to the class-II pyridine nucleotide-disulfide oxidoreductase family. In terms of assembly, homodimer. The cofactor is FAD.

It is found in the cytoplasm. The catalysed reaction is [thioredoxin]-dithiol + NADP(+) = [thioredoxin]-disulfide + NADPH + H(+). The polypeptide is Thioredoxin reductase (trxB) (Mycoplasma genitalium (strain ATCC 33530 / DSM 19775 / NCTC 10195 / G37) (Mycoplasmoides genitalium)).